We begin with the raw amino-acid sequence, 306 residues long: Pantothenate kinase (306 aa).

91–98 (GSVAVGKS) is a binding site for ATP.

The protein belongs to the prokaryotic pantothenate kinase family.

It is found in the cytoplasm. It carries out the reaction (R)-pantothenate + ATP = (R)-4'-phosphopantothenate + ADP + H(+). Its pathway is cofactor biosynthesis; coenzyme A biosynthesis; CoA from (R)-pantothenate: step 1/5. The sequence is that of Pantothenate kinase from Streptococcus pneumoniae (strain Hungary19A-6).